Consider the following 126-residue polypeptide: Aspartate 1-decarboxylase (126 aa).

Residue Ser25 is the Schiff-base intermediate with substrate; via pyruvic acid of the active site. Ser25 is modified (pyruvic acid (Ser)). Residue Thr57 participates in substrate binding. Tyr58 serves as the catalytic Proton donor. 73 to 75 (GAA) contacts substrate.

This sequence belongs to the PanD family. In terms of assembly, heterooctamer of four alpha and four beta subunits. The cofactor is pyruvate. Is synthesized initially as an inactive proenzyme, which is activated by self-cleavage at a specific serine bond to produce a beta-subunit with a hydroxyl group at its C-terminus and an alpha-subunit with a pyruvoyl group at its N-terminus.

The protein resides in the cytoplasm. The catalysed reaction is L-aspartate + H(+) = beta-alanine + CO2. It participates in cofactor biosynthesis; (R)-pantothenate biosynthesis; beta-alanine from L-aspartate: step 1/1. In terms of biological role, catalyzes the pyruvoyl-dependent decarboxylation of aspartate to produce beta-alanine. The sequence is that of Aspartate 1-decarboxylase from Methylobacillus flagellatus (strain ATCC 51484 / DSM 6875 / VKM B-1610 / KT).